Here is a 549-residue protein sequence, read N- to C-terminus: Glucose-6-phosphate isomerase (549 aa).

The Proton donor role is filled by glutamate 353. Catalysis depends on residues histidine 384 and lysine 513.

This sequence belongs to the GPI family.

It is found in the cytoplasm. The catalysed reaction is alpha-D-glucose 6-phosphate = beta-D-fructose 6-phosphate. Its pathway is carbohydrate biosynthesis; gluconeogenesis. It participates in carbohydrate degradation; glycolysis; D-glyceraldehyde 3-phosphate and glycerone phosphate from D-glucose: step 2/4. Catalyzes the reversible isomerization of glucose-6-phosphate to fructose-6-phosphate. The protein is Glucose-6-phosphate isomerase of Brucella ovis (strain ATCC 25840 / 63/290 / NCTC 10512).